A 681-amino-acid chain; its full sequence is DNA-directed RNA polymerase subunit beta' (681 aa).

4 residues coordinate Zn(2+): cysteine 69, cysteine 71, cysteine 87, and cysteine 90. Aspartate 489, aspartate 491, and aspartate 493 together coordinate Mg(2+).

Belongs to the RNA polymerase beta' chain family. RpoC1 subfamily. In terms of assembly, in plastids the minimal PEP RNA polymerase catalytic core is composed of four subunits: alpha, beta, beta', and beta''. When a (nuclear-encoded) sigma factor is associated with the core the holoenzyme is formed, which can initiate transcription. Mg(2+) is required as a cofactor. Requires Zn(2+) as cofactor.

The protein localises to the plastid. The protein resides in the chloroplast. The catalysed reaction is RNA(n) + a ribonucleoside 5'-triphosphate = RNA(n+1) + diphosphate. Functionally, DNA-dependent RNA polymerase catalyzes the transcription of DNA into RNA using the four ribonucleoside triphosphates as substrates. This chain is DNA-directed RNA polymerase subunit beta', found in Solanum bulbocastanum (Wild potato).